Here is a 419-residue protein sequence, read N- to C-terminus: Gamma-glutamyl phosphate reductase (419 aa).

It belongs to the gamma-glutamyl phosphate reductase family.

Its subcellular location is the cytoplasm. It carries out the reaction L-glutamate 5-semialdehyde + phosphate + NADP(+) = L-glutamyl 5-phosphate + NADPH + H(+). The protein operates within amino-acid biosynthesis; L-proline biosynthesis; L-glutamate 5-semialdehyde from L-glutamate: step 2/2. In terms of biological role, catalyzes the NADPH-dependent reduction of L-glutamate 5-phosphate into L-glutamate 5-semialdehyde and phosphate. The product spontaneously undergoes cyclization to form 1-pyrroline-5-carboxylate. The polypeptide is Gamma-glutamyl phosphate reductase (Azobacteroides pseudotrichonymphae genomovar. CFP2).